The following is a 481-amino-acid chain: Probable squalene synthase (481 aa).

The next 2 membrane-spanning stretches (helical) occupy residues 294-314 (SVFN…ELVF) and 416-436 (FLVL…IGAA).

The protein belongs to the phytoene/squalene synthase family. Requires Mg(2+) as cofactor.

The protein resides in the endoplasmic reticulum membrane. The catalysed reaction is 2 (2E,6E)-farnesyl diphosphate + NADPH + H(+) = squalene + 2 diphosphate + NADP(+). It carries out the reaction 2 (2E,6E)-farnesyl diphosphate + NADH + H(+) = squalene + 2 diphosphate + NAD(+). Its pathway is terpene metabolism; lanosterol biosynthesis; lanosterol from farnesyl diphosphate: step 1/3. Catalyzes the condensation of 2 two farnesyl pyrophosphate moieties to form squalene. It is the first committed enzyme of the sterol biosynthesis pathway. Required for the biosynthesis of ergosterol. This is Probable squalene synthase (erg-6) from Neurospora crassa (strain ATCC 24698 / 74-OR23-1A / CBS 708.71 / DSM 1257 / FGSC 987).